Here is a 147-residue protein sequence, read N- to C-terminus: RxLR effector protein Avr3a (147 aa).

A signal peptide spans 1–21 (MRLAIMLSATAVAINFATSSA). The RxLR-dEER motif lies at 44–59 (RLLRKNEENEETSEER). An N6-acetyllysine modification is found at Lys-48. The segment at 77 to 147 (ALTERADAKK…YMMHLGLTGY (71 aa)) is effector domain.

Belongs to the RxLR effector family. Forms homodimers via the RxLR-dEER motif. Interacts with host E3 ligase CMPG1. Interacts with host DRP2. Post-translationally, proteolytically cleaved. The cleavage site directly after the RxLR sequence and the high conservation among other effector proteins suggest that the RxLR motif might play a crucial role in the intracellular processing before secretion. In terms of processing, glycosylated. N-acetylated at Lys-48 after cleavage.

It is found in the secreted. Its subcellular location is the host cytoplasm. Functionally, multifunctional effector that can suppress host BAK1/SERK3-mediated immunity through at least two different pathways. Manipulates plant immunity by targeting and stabilizing host E3 ligase CMPG1. Preventing the normal 26S proteasome-dependent degradation of potato CMPG1, and thus potentially of its protein substrates in the host cell, further abolishes host cell death during the biotrophic phase of infection. Also associates with and affects the function of the dynamin-related protein 2 (DRP2), a plant GTPase involved in immune receptor-mediated endocytosis. The Avr3a(EM) form evades recognition by R3a, thus does not trigger R3a-mediated hypersensitivity and does not suppress INF1-induced cell death. The sequence is that of RxLR effector protein Avr3a from Phytophthora infestans (Potato late blight agent).